Consider the following 456-residue polypeptide: Histidine--tRNA ligase (456 aa).

Belongs to the class-II aminoacyl-tRNA synthetase family. As to quaternary structure, homodimer.

It localises to the cytoplasm. It catalyses the reaction tRNA(His) + L-histidine + ATP = L-histidyl-tRNA(His) + AMP + diphosphate + H(+). This chain is Histidine--tRNA ligase, found in Borrelia garinii subsp. bavariensis (strain ATCC BAA-2496 / DSM 23469 / PBi) (Borreliella bavariensis).